The chain runs to 849 residues: SMY2 homolog 2 (849 aa).

Residues 149-205 enclose the GYF domain; the sequence is ESQWKYIDSNGNIQGPFGTNNMSQWYQGGYFTPTLQICRLATSPEPFGVNDRFIRLG. 4 disordered regions span residues 305 to 505, 527 to 547, 593 to 612, and 634 to 661; these read APLS…TTNL, DLKK…QLDR, TKIN…IKPD, and NRAS…NTSN. Over residues 308 to 318 the composition is skewed to low complexity; that stretch reads STTSSRSNKTT. Residues 319–331 are compositionally biased toward basic and acidic residues; it reads SSHEEKVPSHEEA. Threonine 350 bears the Phosphothreonine mark. Composition is skewed to basic and acidic residues over residues 361–375, 387–403, and 425–443; these read TKQE…KEQN, VDRK…KSKD, and LLEE…EEQR. Residues 410 to 484 adopt a coiled-coil conformation; sequence EEQKRFAKAE…EKQKELLNNI (75 aa). Positions 444-455 are enriched in basic residues; it reads KLKKEKKLKQKQ. Residues 456–479 are compositionally biased toward basic and acidic residues; sequence KKEEEKLKKKKKEEGKLEKEKQKE. Residues 483–505 are compositionally biased toward polar residues; that stretch reads NILTGDTETPSSENTATSITTNL. A compositionally biased stretch (polar residues) spans 594–605; that stretch reads KINSQSKINKAN. Positions 644–661 are enriched in low complexity; the sequence is SRTPSPSSSALNSSNTSN.

The protein belongs to the SMY2/mpd2 family. In terms of assembly, interacts with ribosomes. Interacts with EAP1 and MSL5 (via the GYP domain).

It is found in the cytoplasm. This Saccharomyces cerevisiae (strain ATCC 204508 / S288c) (Baker's yeast) protein is SMY2 homolog 2 (SYH1).